We begin with the raw amino-acid sequence, 97 residues long: Large ribosomal subunit protein bL28 (97 aa).

It belongs to the bacterial ribosomal protein bL28 family.

The polypeptide is Large ribosomal subunit protein bL28 (Rickettsia felis (strain ATCC VR-1525 / URRWXCal2) (Rickettsia azadi)).